The chain runs to 174 residues: Protein TM_1551 (174 aa).

An AMMECR1 domain is found at 2-174 (IGEHPYVKWA…IYRFTVERYK (173 aa)).

This chain is Protein TM_1551, found in Thermotoga maritima (strain ATCC 43589 / DSM 3109 / JCM 10099 / NBRC 100826 / MSB8).